Here is an 82-residue protein sequence, read N- to C-terminus: uncharacterized protein (82 aa).

This is an uncharacterized protein from Lactococcus lactis subsp. lactis (Streptococcus lactis).